A 336-amino-acid chain; its full sequence is Glyceraldehyde-3-phosphate dehydrogenase 1 (336 aa).

NAD(+)-binding positions include 12–13 (RI), aspartate 34, and serine 120. D-glyceraldehyde 3-phosphate contacts are provided by residues 150–152 (SCT), threonine 181, arginine 198, 211–212 (TG), and arginine 234. Residue cysteine 151 is the Nucleophile of the active site. Asparagine 316 contacts NAD(+).

It belongs to the glyceraldehyde-3-phosphate dehydrogenase family. In terms of assembly, homotetramer.

The protein resides in the cytoplasm. It carries out the reaction D-glyceraldehyde 3-phosphate + phosphate + NAD(+) = (2R)-3-phospho-glyceroyl phosphate + NADH + H(+). It functions in the pathway carbohydrate degradation; glycolysis; pyruvate from D-glyceraldehyde 3-phosphate: step 1/5. Its function is as follows. Catalyzes the oxidative phosphorylation of glyceraldehyde 3-phosphate (G3P) to 1,3-bisphosphoglycerate (BPG) using the cofactor NAD. The first reaction step involves the formation of a hemiacetal intermediate between G3P and a cysteine residue, and this hemiacetal intermediate is then oxidized to a thioester, with concomitant reduction of NAD to NADH. The reduced NADH is then exchanged with the second NAD, and the thioester is attacked by a nucleophilic inorganic phosphate to produce BPG. The chain is Glyceraldehyde-3-phosphate dehydrogenase 1 (gapA1) from Staphylococcus epidermidis (strain ATCC 35984 / DSM 28319 / BCRC 17069 / CCUG 31568 / BM 3577 / RP62A).